The following is a 960-amino-acid chain: Phosphoenolpyruvate carboxylase 1 (960 aa).

The residue at position 7 (serine 7) is a Phosphoserine. Residues histidine 168 and lysine 596 contribute to the active site.

This sequence belongs to the PEPCase type 1 family. As to quaternary structure, homotetramer. Mg(2+) is required as a cofactor.

Its subcellular location is the cytoplasm. It catalyses the reaction oxaloacetate + phosphate = phosphoenolpyruvate + hydrogencarbonate. The protein operates within photosynthesis; C3 acid pathway. Its activity is regulated as follows. By light-reversible phosphorylation. In terms of biological role, through the carboxylation of phosphoenolpyruvate (PEP) it forms oxaloacetate, a four-carbon dicarboxylic acid source for the tricarboxylic acid cycle. This chain is Phosphoenolpyruvate carboxylase 1 (PEPC), found in Sorghum bicolor (Sorghum).